A 396-amino-acid polypeptide reads, in one-letter code: 1-deoxy-D-xylulose 5-phosphate reductoisomerase (396 aa).

Residues T10, G11, S12, I13, N38, and N123 each contribute to the NADPH site. K124 is a 1-deoxy-D-xylulose 5-phosphate binding site. NADPH is bound at residue E125. Position 149 (D149) interacts with Mn(2+). Residues S150, E151, S185, and H208 each coordinate 1-deoxy-D-xylulose 5-phosphate. E151 provides a ligand contact to Mn(2+). An NADPH-binding site is contributed by G214. 4 residues coordinate 1-deoxy-D-xylulose 5-phosphate: S221, N226, K227, and E230. Mn(2+) is bound at residue E230.

It belongs to the DXR family. It depends on Mg(2+) as a cofactor. Mn(2+) is required as a cofactor.

The enzyme catalyses 2-C-methyl-D-erythritol 4-phosphate + NADP(+) = 1-deoxy-D-xylulose 5-phosphate + NADPH + H(+). Its pathway is isoprenoid biosynthesis; isopentenyl diphosphate biosynthesis via DXP pathway; isopentenyl diphosphate from 1-deoxy-D-xylulose 5-phosphate: step 1/6. Functionally, catalyzes the NADPH-dependent rearrangement and reduction of 1-deoxy-D-xylulose-5-phosphate (DXP) to 2-C-methyl-D-erythritol 4-phosphate (MEP). The chain is 1-deoxy-D-xylulose 5-phosphate reductoisomerase from Shewanella piezotolerans (strain WP3 / JCM 13877).